Consider the following 150-residue polypeptide: Cell division protein SepF (150 aa).

The protein belongs to the SepF family. Homodimer. Interacts with FtsZ.

The protein resides in the cytoplasm. Cell division protein that is part of the divisome complex and is recruited early to the Z-ring. Probably stimulates Z-ring formation, perhaps through the cross-linking of FtsZ protofilaments. Its function overlaps with FtsA. In Clostridium botulinum (strain ATCC 19397 / Type A), this protein is Cell division protein SepF.